The chain runs to 785 residues: MASKVTDAIVWYQKKEFLSVATTAPGPQQVLPGYCQCSLKDQGLFIQCLIGAYDQQIWEKSVEQREIKFIKLGLRNKPKKTAHVKPDLIDVDLVRGSAFAKAKPESPWTSLTRKGIVRVVFFPFFFRWWLQVTSKVIFFWLLVLYLLQVAAIVLFCSTSSPHSIPLTEVIGPIWLMLLLGTVHCQIVSTRTPKPPLSTGGKRRRKLRKAAHLEVHREGDGSSTTDNTQEGAVQNHGTSTSHSVGTVFRDLWHAAFFLSGSKKAKNSIDKSTETDNGYVSLDGKKTVKSGEDGIQNHEPQCETIRPEETAWNTGTLRNGPSKDTQRTITNVSDEVSSEEGPETGYSLRRHVDRTSEGVLRNRKSHHYKKHYPNEDAPKSGTSCSSRCSSSRQDSESARPESETEDVLWEDLLHCAECHSSCTSETDVENHQINPCVKKEYRDDPFHQSHLPWLHSSHPGLEKISAIVWEGNDCKKADMSVLEISGMIMNRVNSHIPGIGYQIFGNAVSLILGLTPFVFRLSQATDLEQLTAHSASELYVIAFGSNEDVIVLSMVIISFVVRVSLVWIFFFLLCVAERTYKQRLLFAKLFGHLTSARRARKSEVPHFRLKKVQNIKMWLSLRSYLKRRGPQRSVDVIVSSAFLLTISVVFICCAQLLHVHEIFLDCHYNWELVIWCISLTLFLLRFVTLGSETSKKYSNTSILLTEQINLYLKMEKKPNKKEELTLVNNVLKLATKLLKELDSPFRLYGLTMNPLLYNITQVVILSAVSGVISDLLGFNLKLWKIKS.

Positions 46–191 (IQCLIGAYDQ…VHCQIVSTRT (146 aa)) constitute a PHTF domain. The next 2 helical transmembrane spans lie at 136 to 156 (VIFF…VLFC) and 164 to 184 (IPLT…TVHC). Disordered regions lie at residues 190 to 239 (RTPK…GTST) and 304 to 401 (RPEE…PESE). The span at 200-209 (GKRRRKLRKA) shows a compositional bias: basic residues. Residues 210 to 219 (AHLEVHREGD) show a composition bias toward basic and acidic residues. Polar residues-rich tracts occupy residues 220 to 239 (GSST…GTST) and 309 to 333 (AWNT…VSDE). N-linked (GlcNAc...) asparagine glycosylation occurs at Asn-329. A compositionally biased stretch (basic residues) spans 359 to 369 (RNRKSHHYKKH). The segment covering 378–390 (SGTSCSSRCSSSR) has biased composition (low complexity). The span at 391 to 400 (QDSESARPES) shows a compositional bias: basic and acidic residues. The next 4 membrane-spanning stretches (helical) occupy residues 497–517 (IGYQ…PFVF), 553–573 (VIIS…LLCV), 634–654 (VIVS…CAQL), and 668–688 (WELV…VTLG). N-linked (GlcNAc...) asparagine glycans are attached at residues Asn-697 and Asn-756. Residues 760–780 (VVILSAVSGVISDLLGFNLKL) form a helical membrane-spanning segment.

It localises to the membrane. The sequence is that of Protein PHTF2 (PHTF2) from Homo sapiens (Human).